We begin with the raw amino-acid sequence, 353 residues long: Phospho-N-acetylmuramoyl-pentapeptide-transferase (353 aa).

10 helical membrane-spanning segments follow: residues 22 to 42 (FAFFIALCLSLFLMPKFITWA), 65 to 85 (TPTMGGLIFISSAVIASLSCI), 88 to 108 (DNIFAISALLCLILFCLIGLI), 129 to 149 (LLTQIIAGLICILPLYFSSEL), 161 to 181 (PLFDMEIFAIAFWILVLISSS), 192 to 212 (GLATVPSIFSLSTLGIFLYLS), 228 to 248 (GLGEVVIICAALIGALMGFLW), 256 to 276 (VFMGDSGSLALGGFIGFLAII), 281 to 301 (ILLLLIGFVFVLETVSVILQV), and 330 to 350 (KIIVRFWMIALLSNLLALASI).

It belongs to the glycosyltransferase 4 family. MraY subfamily. Mg(2+) is required as a cofactor.

The protein localises to the cell inner membrane. It catalyses the reaction UDP-N-acetyl-alpha-D-muramoyl-L-alanyl-gamma-D-glutamyl-meso-2,6-diaminopimeloyl-D-alanyl-D-alanine + di-trans,octa-cis-undecaprenyl phosphate = di-trans,octa-cis-undecaprenyl diphospho-N-acetyl-alpha-D-muramoyl-L-alanyl-D-glutamyl-meso-2,6-diaminopimeloyl-D-alanyl-D-alanine + UMP. It participates in cell wall biogenesis; peptidoglycan biosynthesis. Functionally, catalyzes the initial step of the lipid cycle reactions in the biosynthesis of the cell wall peptidoglycan: transfers peptidoglycan precursor phospho-MurNAc-pentapeptide from UDP-MurNAc-pentapeptide onto the lipid carrier undecaprenyl phosphate, yielding undecaprenyl-pyrophosphoryl-MurNAc-pentapeptide, known as lipid I. The protein is Phospho-N-acetylmuramoyl-pentapeptide-transferase of Campylobacter jejuni subsp. jejuni serotype O:23/36 (strain 81-176).